A 378-amino-acid chain; its full sequence is Cln5-like protein 1 (378 aa).

An N-terminal signal peptide occupies residues 1–20 (MNKIIIFILFLISILQSVRG). Asn63, Asn93, Asn135, Asn181, Asn220, Asn226, Asn254, and Asn280 each carry an N-linked (GlcNAc...) asparagine glycan. Residues 308-328 (WIFIIILLSFTTVYLVGGILI) form a helical membrane-spanning segment.

The protein belongs to the CLN5 family.

Its subcellular location is the membrane. The chain is Cln5-like protein 1 (cln5la) from Dictyostelium discoideum (Social amoeba).